The sequence spans 153 residues: Penitrem biosynthesis cluster 1 protein I (153 aa).

Its pathway is secondary metabolite biosynthesis. Functionally, part of the gene cluster that mediates the biosynthesis of the indole diterpenes penitrems. The geranylgeranyl diphosphate (GGPP) synthase ptmG catalyzes the first step in penitrem biosynthesis via conversion of farnesyl pyrophosphate and isopentyl pyrophosphate into geranylgeranyl pyrophosphate (GGPP). Condensation of indole-3-glycerol phosphate with GGPP by the prenyl transferase ptmC then forms 3-geranylgeranylindole (3-GGI). Epoxidation by the FAD-dependent monooxygenase ptmM leads to a epoxidized-GGI that is substrate of the terpene cyclase ptmB for cyclization to yield paspaline. Paspaline is subsequently converted to 13-desoxypaxilline by the cytochrome P450 monooxygenase ptmP, the latter being then converted to paxilline by the cytochrome P450 monooxygenase ptmQ. Paxilline is converted to beta-paxitriol via C-10 ketoreduction by the short-chain dehydrogenase ptmH which can be monoprenylated at the C-20 by the indole diterpene prenyltransferase ptmD. A two-step elimination (acetylation and elimination) process performed by the O-acetyltransferase ptmV and ptmI leads to the production of the prenylated form of penijanthine. The FAD-linked oxidoreductase ptmO then converts the prenylated form of penijanthine into PC-M5 which is in turn transformed into PC-M4 by the aromatic dimethylallyltransferase ptmE. Five sequential oxidative transformations performed by the cytochrome P450 monooxygenases ptmK, ptmU, ptmL, ptmN and ptmJ yield the various penitrem compounds. PtmK, ptmU and ptmM are involved in the formation of the key bicyclic ring of penitrem C via the formation of the intermediates secopenitrem D and penitrem D. PtmL catalyzes the epoxidation of penitrem D and C to yield penitrem B and F, respectively. PtmJ catalyzes the last benzylic hydroxylation to convert penitrem B to prenitrem E and penitrem F to penitrem A. This chain is Penitrem biosynthesis cluster 1 protein I, found in Penicillium ochrochloron.